Reading from the N-terminus, the 137-residue chain is Protein Flattop homolog (137 aa).

Belongs to the Flattop family.

It localises to the cytoplasm. Its subcellular location is the cytoskeleton. The protein localises to the flagellum axoneme. In terms of biological role, microtubule inner protein (MIP) part of the dynein-decorated doublet microtubules (DMTs) in cilia axoneme. Acts as a regulator of cilium basal body docking and positioning in mono- and multiciliated cells. Regulates basal body docking and cilia formation in multiciliated lung cells. Regulates kinocilium positioning and stereocilia bundle morphogenesis in the inner ear. In Chlamydomonas reinhardtii (Chlamydomonas smithii), this protein is Protein Flattop homolog.